Here is a 214-residue protein sequence, read N- to C-terminus: Probable transaldolase (214 aa).

K83 functions as the Schiff-base intermediate with substrate in the catalytic mechanism.

This sequence belongs to the transaldolase family. Type 3B subfamily.

The protein resides in the cytoplasm. It carries out the reaction D-sedoheptulose 7-phosphate + D-glyceraldehyde 3-phosphate = D-erythrose 4-phosphate + beta-D-fructose 6-phosphate. The protein operates within carbohydrate degradation; pentose phosphate pathway; D-glyceraldehyde 3-phosphate and beta-D-fructose 6-phosphate from D-ribose 5-phosphate and D-xylulose 5-phosphate (non-oxidative stage): step 2/3. Transaldolase is important for the balance of metabolites in the pentose-phosphate pathway. The sequence is that of Probable transaldolase from Geotalea uraniireducens (strain Rf4) (Geobacter uraniireducens).